Here is a 427-residue protein sequence, read N- to C-terminus: 3-phosphoshikimate 1-carboxyvinyltransferase (427 aa).

3 residues coordinate 3-phosphoshikimate: lysine 21, serine 22, and arginine 26. Residue lysine 21 participates in phosphoenolpyruvate binding. Residues glycine 93 and arginine 121 each coordinate phosphoenolpyruvate. 3-phosphoshikimate-binding residues include serine 166, glutamine 168, aspartate 314, and lysine 341. Residue glutamine 168 coordinates phosphoenolpyruvate. The active-site Proton acceptor is aspartate 314. Arginine 345 and arginine 387 together coordinate phosphoenolpyruvate.

The protein belongs to the EPSP synthase family. As to quaternary structure, monomer.

It is found in the cytoplasm. The catalysed reaction is 3-phosphoshikimate + phosphoenolpyruvate = 5-O-(1-carboxyvinyl)-3-phosphoshikimate + phosphate. It functions in the pathway metabolic intermediate biosynthesis; chorismate biosynthesis; chorismate from D-erythrose 4-phosphate and phosphoenolpyruvate: step 6/7. Catalyzes the transfer of the enolpyruvyl moiety of phosphoenolpyruvate (PEP) to the 5-hydroxyl of shikimate-3-phosphate (S3P) to produce enolpyruvyl shikimate-3-phosphate and inorganic phosphate. In Alkaliphilus oremlandii (strain OhILAs) (Clostridium oremlandii (strain OhILAs)), this protein is 3-phosphoshikimate 1-carboxyvinyltransferase.